We begin with the raw amino-acid sequence, 286 residues long: Pyridoxal kinase PdxY (286 aa).

Substrate is bound by residues serine 9 and 44 to 45; that span reads TQ. ATP contacts are provided by residues aspartate 111, alanine 143, glutamate 148, lysine 181, and 208–211; that span reads RPLV. Aspartate 222 contacts substrate.

It belongs to the pyridoxine kinase family. PdxY subfamily. In terms of assembly, homodimer. The cofactor is Mg(2+).

The catalysed reaction is pyridoxal + ATP = pyridoxal 5'-phosphate + ADP + H(+). Its pathway is cofactor metabolism; pyridoxal 5'-phosphate salvage; pyridoxal 5'-phosphate from pyridoxal: step 1/1. In terms of biological role, pyridoxal kinase involved in the salvage pathway of pyridoxal 5'-phosphate (PLP). Catalyzes the phosphorylation of pyridoxal to PLP. The sequence is that of Pyridoxal kinase PdxY from Pectobacterium atrosepticum (strain SCRI 1043 / ATCC BAA-672) (Erwinia carotovora subsp. atroseptica).